The sequence spans 1377 residues: DNA-directed RNA polymerase subunit beta' (1377 aa).

Residues Cys60, Cys62, Cys75, and Cys78 each contribute to the Zn(2+) site. Mg(2+) is bound by residues Asp449, Asp451, and Asp453. Zn(2+) is bound by residues Cys777, Cys851, Cys858, and Cys861.

It belongs to the RNA polymerase beta' chain family. In terms of assembly, the RNAP catalytic core consists of 2 alpha, 1 beta, 1 beta' and 1 omega subunit. When a sigma factor is associated with the core the holoenzyme is formed, which can initiate transcription. It depends on Mg(2+) as a cofactor. The cofactor is Zn(2+).

The catalysed reaction is RNA(n) + a ribonucleoside 5'-triphosphate = RNA(n+1) + diphosphate. In terms of biological role, DNA-dependent RNA polymerase catalyzes the transcription of DNA into RNA using the four ribonucleoside triphosphates as substrates. The sequence is that of DNA-directed RNA polymerase subunit beta' from Borreliella burgdorferi (strain ZS7) (Borrelia burgdorferi).